The following is a 156-amino-acid chain: Arginine repressor (156 aa).

This sequence belongs to the ArgR family.

Its subcellular location is the cytoplasm. Its pathway is amino-acid biosynthesis; L-arginine biosynthesis [regulation]. Regulates arginine biosynthesis genes. The sequence is that of Arginine repressor from Escherichia fergusonii (strain ATCC 35469 / DSM 13698 / CCUG 18766 / IAM 14443 / JCM 21226 / LMG 7866 / NBRC 102419 / NCTC 12128 / CDC 0568-73).